The chain runs to 140 residues: MAKKVTGFVKLQIPAGKANPAPPVGTALGPQGINIMGFCKEFNARTQGGDMIIPVEVTIYADKSFTFILKTPPAAELIKKELGVERGSGQPNKVKVGTITRAQLEKIATTKMPDLNCESMESAVAMIAGAARSMGITVKD.

This sequence belongs to the universal ribosomal protein uL11 family. In terms of assembly, part of the ribosomal stalk of the 50S ribosomal subunit. Interacts with L10 and the large rRNA to form the base of the stalk. L10 forms an elongated spine to which L12 dimers bind in a sequential fashion forming a multimeric L10(L12)X complex. One or more lysine residues are methylated.

Its function is as follows. Forms part of the ribosomal stalk which helps the ribosome interact with GTP-bound translation factors. The protein is Large ribosomal subunit protein uL11 of Gemmatimonas aurantiaca (strain DSM 14586 / JCM 11422 / NBRC 100505 / T-27).